A 222-amino-acid chain; its full sequence is Bone marrow proteoglycan (222 aa).

The signal sequence occupies residues 1-16 (MKLPLLLALLFGAVSA). The propeptide at 17-105 (LHLRSETSTF…VKVVGIPGCQ (89 aa)) is acidic. A glycan (O-linked (GalNAc...) threonine; partial) is linked at threonine 23. Serine 24 carries an O-linked (GalNAc...) serine glycan. An O-linked (GalNAc...) threonine glycan is attached at threonine 25. The interval 25–75 (TFETPLGAKTLPEDEETPEQEMEETPCRELEEEEEWGSGSEDASKKDGAVE) is disordered. Threonine 34 carries O-linked (GalNAc...) threonine; partial glycosylation. The segment covering 37–60 (EDEETPEQEMEETPCRELEEEEEW) has biased composition (acidic residues). O-linked (Xyl...) (chondroitin sulfate) serine glycosylation occurs at serine 62. Asparagine 86 carries N-linked (GlcNAc...) asparagine glycosylation. A C-type lectin domain is found at 104-222 (CQTCRYLLVR…LRRLPFICSY (119 aa)). 2 cysteine pairs are disulfide-bonded: cysteine 125/cysteine 220 and cysteine 197/cysteine 212.

In pregnancy serum, the proform exists as a disulfide-linked 2:2 heterotetramer with PAPPA, as a disulfide-linked 2:2 heterotetramer with AGT, and as a complex (probably a 2:2:2 heterohexamer) with AGT and C3dg. Post-translationally, nitrated. As to expression, detected in plasma and urine (at protein level). Detected in placenta (at protein level). High levels of the proform in placenta and pregnancy serum; in placenta, localized to X cells of septa and anchoring villi. Lower levels in a variety of other tissues including kidney, myometrium, endometrium, ovaries, breast, prostate, bone marrow and colon.

The protein resides in the secreted. The protein localises to the cytoplasmic vesicle. It localises to the secretory vesicle. Its function is as follows. Cytotoxin and helminthotoxin. Also induces non-cytolytic histamine release from human basophils. Involved in antiparasitic defense mechanisms and immune hypersensitivity reactions. The proform acts as a proteinase inhibitor, reducing the activity of PAPPA. This Homo sapiens (Human) protein is Bone marrow proteoglycan (PRG2).